A 227-amino-acid polypeptide reads, in one-letter code: MAHPAQLGLQDATSPVMEELITFHDHALMAMSLISLLVLYALFSTLTTKMTNTNITDAQEMETIWTILPAIILVLIAFPSLRILYMTDEVNNPSFTIKSIGHQWYWTYEYTDYGGLIFNSYMLPPLFLNPGDLRLLEVDNRVVLPIEAPVRMMITSQDVLHSWTIPTLGLKTDAVPGRLNQTVFTATRPGVYYGQCSEICGANHSFMPIVAELIPLKIFEMGPVFTL.

Residues M1–S14 lie on the Mitochondrial intermembrane side of the membrane. Residues P15–T45 traverse the membrane as a helical segment. Residues L46–Q59 are Mitochondrial matrix-facing. The chain crosses the membrane as a helical span at residues E60–T87. Residues D88 to L227 are Mitochondrial intermembrane-facing. Cu cation contacts are provided by H161, C196, E198, C200, H204, and M207. E198 is a Mg(2+) binding site.

It belongs to the cytochrome c oxidase subunit 2 family. As to quaternary structure, component of the cytochrome c oxidase (complex IV, CIV), a multisubunit enzyme composed of 14 subunits. The complex is composed of a catalytic core of 3 subunits MT-CO1, MT-CO2 and MT-CO3, encoded in the mitochondrial DNA, and 11 supernumerary subunits COX4I, COX5A, COX5B, COX6A, COX6B, COX6C, COX7A, COX7B, COX7C, COX8 and NDUFA4, which are encoded in the nuclear genome. The complex exists as a monomer or a dimer and forms supercomplexes (SCs) in the inner mitochondrial membrane with NADH-ubiquinone oxidoreductase (complex I, CI) and ubiquinol-cytochrome c oxidoreductase (cytochrome b-c1 complex, complex III, CIII), resulting in different assemblies (supercomplex SCI(1)III(2)IV(1) and megacomplex MCI(2)III(2)IV(2)). Found in a complex with TMEM177, COA6, COX18, COX20, SCO1 and SCO2. Interacts with TMEM177 in a COX20-dependent manner. Interacts with COX20. Interacts with COX16. Cu cation serves as cofactor.

Its subcellular location is the mitochondrion inner membrane. It carries out the reaction 4 Fe(II)-[cytochrome c] + O2 + 8 H(+)(in) = 4 Fe(III)-[cytochrome c] + 2 H2O + 4 H(+)(out). Functionally, component of the cytochrome c oxidase, the last enzyme in the mitochondrial electron transport chain which drives oxidative phosphorylation. The respiratory chain contains 3 multisubunit complexes succinate dehydrogenase (complex II, CII), ubiquinol-cytochrome c oxidoreductase (cytochrome b-c1 complex, complex III, CIII) and cytochrome c oxidase (complex IV, CIV), that cooperate to transfer electrons derived from NADH and succinate to molecular oxygen, creating an electrochemical gradient over the inner membrane that drives transmembrane transport and the ATP synthase. Cytochrome c oxidase is the component of the respiratory chain that catalyzes the reduction of oxygen to water. Electrons originating from reduced cytochrome c in the intermembrane space (IMS) are transferred via the dinuclear copper A center (CU(A)) of subunit 2 and heme A of subunit 1 to the active site in subunit 1, a binuclear center (BNC) formed by heme A3 and copper B (CU(B)). The BNC reduces molecular oxygen to 2 water molecules using 4 electrons from cytochrome c in the IMS and 4 protons from the mitochondrial matrix. This chain is Cytochrome c oxidase subunit 2 (MT-CO2), found in Mandrillus leucophaeus (Drill).